Consider the following 1022-residue polypeptide: MARFPQLLFLLLASIGLLSAAQNHSDSEWPLHDNGLSTVVQWDHYSFHVHGQRIFVFSGEFHYWRIPVPGLWRDILEKIKAAGFTAFAFYSSWGYHAPNNHTVDFSTGARDITPIYELAKELGMYIIVRPGPYVNAEASAGGYPLWVTTGAYGSLRNDDARYTAAWKPYFAKMSEITSQYQVTDGHNTFCYQIENEYGQQWIGDPVDRNPNQTAVAYMELLEASARENGIVVPLTANDPNMNTKSWGSDWSHAGGNVDVVGLDSYPSCWTCDVTQCTSTNGEYVPYKVMQYYDYFQEVQPTMPGFMPEFQGGSYNPWAGPEGGCPGDTGVDFANLFYRWNIAQRVTAMSLYMLYGGTNWGAIAAPVTATSYDYSSPISEDRSIGSKYYETKLLALFTRSATDLTMTDRIGNGTHYTNNPAVAAYELRNPVTNGAFYVTIHADSTVGTDESFRLNVNTSAGALTVPSKGSIRLNGHQSKIIVTDFRFGPSHTLLYSTAEVLTHAVMDKKATLVLWVPTGESGEFAVKGAKSGKVERCPQCSNATFTRKKDVLVVNFTQAGGMSVLQLNNGVRVVLLDRAAAYKFWAPPLTDDPFAPETDLVLVQGPYLVRSASLSGSTLALRGDSANETALEVFASKKVHTVTWNGKRIKTSRSSYGSLTASLAAPPAVSLPALSSAQWKSQDSLPERLPSYDDSGPAWVDANHMTTQNPRTPDTLPVLYADEYGFHNGIRLWRGSFTDAASGVYLNVQGGAAFGWSAYLNGHFLGSHLGTATTSQANKTLLFPAGTLRKNTTNTILVIHDDTGHDQTTGALNPRGILAARLLAPSDSSTAPNFTQWRVAGTAGGESDLDPVRGVYNEDGLFAERMGWHLPGFDDADWPANNSTTTRGAQVSLSVTGATVRFFRAVVPLHLPRGVDASISFMLGTPAGASTAYRAQLFVNGYQYGRFYPHIGNQVVYPVPAGVLDYDGENTIGVAVWAQSEAGAEMSLDWRVNYVADSSLDAVRVAAEGALRPGWSEERLQYA.

Positions 1–20 are cleaved as a signal peptide; the sequence is MARFPQLLFLLLASIGLLSA. An N-linked (GlcNAc...) asparagine glycan is attached at Asn-23. Tyr-90 is a substrate binding site. Asn-100 is a glycosylation site (N-linked (GlcNAc...) asparagine). Positions 135, 136, 137, and 195 each coordinate substrate. The active-site Proton donor is the Glu-196. Asn-211 is a glycosylation site (N-linked (GlcNAc...) asparagine). Substrate is bound at residue Tyr-265. An intrachain disulfide couples Cys-271 to Cys-324. The active-site Nucleophile is Glu-308. Residue Tyr-373 participates in substrate binding. Asn-411, Asn-456, Asn-541, Asn-554, Asn-626, Asn-777, Asn-790, Asn-832, Asn-880, and Asn-881 each carry an N-linked (GlcNAc...) asparagine glycan.

It belongs to the glycosyl hydrolase 35 family.

It is found in the secreted. The catalysed reaction is Hydrolysis of terminal non-reducing beta-D-galactose residues in beta-D-galactosides.. In terms of biological role, cleaves beta-linked terminal galactosyl residues from gangliosides, glycoproteins, and glycosaminoglycans. The chain is Probable beta-galactosidase B (lacB) from Aspergillus terreus (strain NIH 2624 / FGSC A1156).